We begin with the raw amino-acid sequence, 195 residues long: Protein GrpE (195 aa).

The protein belongs to the GrpE family. In terms of assembly, homodimer.

It localises to the cytoplasm. Its function is as follows. Participates actively in the response to hyperosmotic and heat shock by preventing the aggregation of stress-denatured proteins, in association with DnaK and GrpE. It is the nucleotide exchange factor for DnaK and may function as a thermosensor. Unfolded proteins bind initially to DnaJ; upon interaction with the DnaJ-bound protein, DnaK hydrolyzes its bound ATP, resulting in the formation of a stable complex. GrpE releases ADP from DnaK; ATP binding to DnaK triggers the release of the substrate protein, thus completing the reaction cycle. Several rounds of ATP-dependent interactions between DnaJ, DnaK and GrpE are required for fully efficient folding. The polypeptide is Protein GrpE (Francisella tularensis subsp. holarctica (strain OSU18)).